The primary structure comprises 606 residues: Kelch-like protein 26 (606 aa).

Residues 1–19 (MAESGGSSGSSQSPERPSS) show a composition bias toward low complexity. Positions 1-20 (MAESGGSSGSSQSPERPSSL) are disordered. Position 2 is an N-acetylalanine (Ala-2). The BTB domain occupies 54 to 121 (LDVVLTVNSE…AYSAEVTLDL (68 aa)). Residues 156–257 (CLHIGQMATT…QPAELVDSVQ (102 aa)) form the BACK domain. Kelch repeat units follow at residues 301-352 (SLVA…VLDN), 353-404 (FVYV…ALGG), 406-451 (LYAT…AAAG), 452-499 (RLYI…GAAG), 501-550 (IYAL…LLER), and 552-599 (IYIV…AVLL). Ser-430 bears the Phosphoserine mark.

Its function is as follows. May play a role in endo(sarco)plasmic reticulum (ER/SR) mitochondrial signaling. May be part of the ubiquitin-proteasome system (UPS) and affect ubiquitination and degradation of target substrates in cardiomyocytes. The sequence is that of Kelch-like protein 26 (Klhl26) from Mus musculus (Mouse).